Here is a 121-residue protein sequence, read N- to C-terminus: C-type natriuretic peptide 4 (121 aa).

Residues 1-22 form the signal peptide; the sequence is MNLSYLVACGLLVTFLSDKMDA. Positions 23–96 are excised as a propeptide; the sequence is QPLTPAQQKS…SRRHKSGSKK (74 aa). Residues 80-109 are disordered; that stretch reads LLNDQPASRRHKSGSKKGGSTSRSGCFGHK. Cys105 and Cys121 form a disulfide bridge.

This sequence belongs to the natriuretic peptide family. Brain, spinal cord, spleen, heart and fin, and to a lower extent in gill and ovary.

The protein localises to the secreted. Exhibits natriuretic and vasodepressant activity. Has cGMP-stimulating activity. May help to regulate body fluid homeostasis in a variety of aquatic environments. This Oryzias latipes (Japanese rice fish) protein is C-type natriuretic peptide 4.